Reading from the N-terminus, the 164-residue chain is MVDDSTRKTLSNIPLLQTRAGPREKDIWVQRLKEEYQALIKYVENNKQSGSDWFRLESNKEGTKWFGKCWYMHNLLKYEFEVEFDIPVTYPTTAPEIAVPELDGKTAKMYRGGKICLTEHFKPLWARNVPKFGIAHAMALGLAPWLAVEIPDLIEKGIISYKEK.

Residue Cys116 is the Glycyl thioester intermediate of the active site.

It belongs to the ubiquitin-conjugating enzyme family. UFC1 subfamily.

Functionally, E2-like enzyme which forms an intermediate with UFM1 via a thioester linkage. This chain is Ubiquitin-fold modifier-conjugating enzyme 1, found in Drosophila willistoni (Fruit fly).